A 203-amino-acid polypeptide reads, in one-letter code: Thymidylate kinase (203 aa).

7–14 (GPDGSGKS) provides a ligand contact to ATP.

Belongs to the thymidylate kinase family.

The catalysed reaction is dTMP + ATP = dTDP + ADP. In terms of biological role, phosphorylation of dTMP to form dTDP in both de novo and salvage pathways of dTTP synthesis. The chain is Thymidylate kinase from Finegoldia magna (strain ATCC 29328 / DSM 20472 / WAL 2508) (Peptostreptococcus magnus).